Consider the following 489-residue polypeptide: Transmembrane protein 161A (489 aa).

An N-terminal signal peptide occupies residues 1–23 (MAVMGIQMVVTLLVASLMQRVSP). The Extracellular segment spans residues 24–98 (HYSFGRWLLC…INTMDALVLR (75 aa)). Asparagine 34 is a glycosylation site (N-linked (GlcNAc...) asparagine). Residues 99 to 119 (YFLEYQWFIDFALYSTIIYLF) traverse the membrane as a helical segment. Over 120-134 (TEAYYCVVDAQNEIN) the chain is Cytoplasmic. Residues 135 to 155 (IGVLWCLMSIIFSIKVLFTVM) traverse the membrane as a helical segment. Residues 156–166 (KHYFRSEEGGE) lie on the Extracellular side of the membrane. Residues 167 to 187 (RSVCMTFAFFFLLIAMIVTIV) form a helical membrane-spanning segment. Over 188–224 (RDEYLEFGLEPGLASVCHNLENFLAQQGWQWSMPFVK) the chain is Cytoplasmic. Residues 225–245 (LAFKIALVALCAFLGGCLTFP) form a helical membrane-spanning segment. At 246–264 (GLRLAQTHLDALKMAADRP) the chain is on the extracellular side. Residues 265–285 (MLQLLLHMSFLPPVIVVVLWI) form a helical membrane-spanning segment. Topologically, residues 286 to 304 (RPITRDFLLNAPMGKESVE) are cytoplasmic. The chain crosses the membrane as a helical span at residues 305–325 (LMSNSAYNTFRLWIIVLLCLL). Residues 326–370 (RFCLTRFHLQAYLCLADRWVEQMKREAGRISMLEIQRKISRIFCY) lie on the Extracellular side of the membrane. A helical transmembrane segment spans residues 371–391 (LTVVALQYLAPVILTFHCVFM). Residues 392-459 (LKSLGDYSWG…GLFTPLFFRG (68 aa)) lie on the Cytoplasmic side of the membrane. A disordered region spans residues 413-432 (VDSSPVQSHSPTSEEEEDTE). A helical membrane pass occupies residues 460–480 (IFSFLTWWVSVCQIITSLFGL). Over 481–489 (YFHQYLGAS) the chain is Extracellular.

The protein belongs to the TMEM161 family.

The protein resides in the membrane. May play a role in protection against oxidative stress. The protein is Transmembrane protein 161A (tmem161a) of Xenopus laevis (African clawed frog).